Consider the following 294-residue polypeptide: Survival motor neuron protein (294 aa).

Positions 1–12 (MAMSSGGSGGGV) are enriched in gly residues. Residues 1–32 (MAMSSGGSGGGVPEQEDSVLFRRGTGQSDDSD) form a disordered region. Alanine 2 is subject to N-acetylalanine. A phosphoserine; by PKA mark is found at serine 4, serine 5, and serine 8. The tract at residues 13-44 (PEQEDSVLFRRGTGQSDDSDIWDDTALIKAYD) is P1 (binding site for GEMIN2). Threonine 25 bears the Phosphothreonine mark. Phosphoserine is present on residues serine 28 and serine 31. Lysine 51 participates in a covalent cross-link: Glycyl lysine isopeptide (Lys-Gly) (interchain with G-Cter in SUMO2). Residues 58–88 (DICETSGKPKTTPKRKPAKKNKSQKKNTAAP) are disordered. Over residues 68–82 (TTPKRKPAKKNKSQK) the composition is skewed to basic residues. Threonine 69 carries the phosphothreonine modification. The residue at position 85 (threonine 85) is a Phosphothreonine; by PKA. The 61-residue stretch at 91–151 (QWKVGDKCSA…LSPISEVANN (61 aa)) folds into the Tudor domain. The segment at 97–209 (KCSAIWSEDG…MPGPRLGPGK (113 aa)) is required for interaction with RPP20/POP7. Over residues 156–166 (AQENENESQVS) the composition is skewed to low complexity. Residues 156-222 (AQENENESQV…KFNGPPPPPP (67 aa)) form a disordered region. Residue serine 187 is modified to Phosphoserine; by PKA. A compositionally biased stretch (pro residues) spans 194–204 (LPPPPPMPGPR). Lysine 209 participates in a covalent cross-link: Glycyl lysine isopeptide (Lys-Gly) (interchain with G-Cter in SUMO2). Positions 240 to 267 (PPIIPPPPPICPDSLDDADALGSMLISW) are P2 (binding site for SM B). The segment at 279–294 (GFRQNQKEGRCSHSLN) is required for interaction with SYNCRIP.

It belongs to the SMN family. In terms of assembly, homooligomer; may form higher order homooligomers in the dimer to octamer range. Part of the core SMN complex that contains SMN1, GEMIN2/SIP1, DDX20/GEMIN3, GEMIN4, GEMIN5, GEMIN6, GEMIN7, GEMIN8 and STRAP/UNRIP. Part of the SMN-Sm complex that contains SMN1, GEMIN2/SIP1, DDX20/GEMIN3, GEMIN4, GEMIN5, GEMIN6, GEMIN7, GEMIN8, STRAP/UNRIP and the Sm proteins SNRPB, SNRPD1, SNRPD2, SNRPD3, SNRPE, SNRPF and SNRPG. Component of an import snRNP complex composed of KPNB1, RNUT1, SMN1 and ZNF259. Interacts with DDX20, FBL, NOLA1, RNUT1, SYNCRIP and with several spliceosomal snRNP core Sm proteins, including SNRPB, SNRPD1, SNRPD2, SNRPD3, SNRPE and ILF3. Interacts with GEMIN2; the interaction is direct. Interacts with GEMIN3; the interaction is direct. Interacts with GEMIN8; the interaction is direct. Interacts with SNRPB; the interaction is direct. Interacts (via Tudor domain) with SNRPD1 (via C-terminus); the interaction is direct. Interacts with SNRPD2; the interaction is direct. Interacts (via Tudor domain) with SNRPD3 (via C-terminus); the interaction is direct. Interacts with SNRPE; the interaction is direct. Interacts with OSTF1, LSM10, LSM11 and RPP20/POP7. Interacts (via C-terminal region) with ZPR1 (via C-terminal region). Interacts (via Tudor domain) with COIL. Interacts with SETX; recruits SETX to POLR2A. Interacts with POLR2A (via the C-terminal domain (CTD)). Interacts with PRMT5. Interacts with XRN2. Interacts (via C-terminus) with FMR1 (via C-terminus); the interaction is direct and occurs in a RNA-independent manner. Interacts (via Tudor domain) with SF3B2 ('Arg-508'-methylated form). Interacts with WRAP53/TCAB1. Interacts (via Tudor domain) with ELAVL4 in an RNA-independent manner; the interaction is required for localization of ELAVL4 to RNA granules. Interacts with FRG1.

It is found in the nucleus. The protein localises to the gem. Its subcellular location is the cajal body. The protein resides in the cytoplasm. It localises to the cytoplasmic granule. It is found in the perikaryon. The protein localises to the cell projection. Its subcellular location is the neuron projection. The protein resides in the axon. It localises to the myofibril. It is found in the sarcomere. The protein localises to the z line. Functionally, the SMN complex catalyzes the assembly of small nuclear ribonucleoproteins (snRNPs), the building blocks of the spliceosome, and thereby plays an important role in the splicing of cellular pre-mRNAs. Most spliceosomal snRNPs contain a common set of Sm proteins SNRPB, SNRPD1, SNRPD2, SNRPD3, SNRPE, SNRPF and SNRPG that assemble in a heptameric protein ring on the Sm site of the small nuclear RNA to form the core snRNP (Sm core). In the cytosol, the Sm proteins SNRPD1, SNRPD2, SNRPE, SNRPF and SNRPG are trapped in an inactive 6S pICln-Sm complex by the chaperone CLNS1A that controls the assembly of the core snRNP. To assemble core snRNPs, the SMN complex accepts the trapped 5Sm proteins from CLNS1A forming an intermediate. Binding of snRNA inside 5Sm ultimately triggers eviction of the SMN complex, thereby allowing binding of SNRPD3 and SNRPB to complete assembly of the core snRNP. Within the SMN complex, SMN1 acts as a structural backbone and together with GEMIN2 it gathers the Sm complex subunits. Ensures the correct splicing of U12 intron-containing genes that may be important for normal motor and proprioceptive neurons development. Also required for resolving RNA-DNA hybrids created by RNA polymerase II, that form R-loop in transcription terminal regions, an important step in proper transcription termination. May also play a role in the metabolism of small nucleolar ribonucleoprotein (snoRNPs). The protein is Survival motor neuron protein (SMN1) of Macaca fascicularis (Crab-eating macaque).